A 350-amino-acid polypeptide reads, in one-letter code: Chemokine C-C motif receptor-like 2 (350 aa).

Over 1 to 43 (MANYTSAPEDDYDVFIEDDLSNDERELCSPYDPQALLAQLVPY) the chain is Extracellular. N3 is a glycosylation site (N-linked (GlcNAc...) asparagine). A helical membrane pass occupies residues 44–64 (LFITVFLVGLLDNILVVLIMV). At 65–74 (KYKGLKQVEN) the chain is on the cytoplasmic side. A helical transmembrane segment spans residues 75-95 (IYLLNLAVCNLCFLCTLPFWV). The Extracellular segment spans residues 96-110 (HMAWHEGDPGEPLCK). The cysteines at positions 109 and 187 are disulfide-linked. The chain crosses the membrane as a helical span at residues 111–131 (ILLVLYSVGLFSEAFFNVLLT). The Cytoplasmic portion of the chain corresponds to 132–149 (VQRYQKFFQMRGFFSATR). The chain crosses the membrane as a helical span at residues 150–170 (MVAGSIFPSALVWVIAVLVML). The Extracellular portion of the chain corresponds to 171–204 (PELAFYKPQMENQKYKCFFGRPLFLPADETFWKH). Residues 205 to 225 (FLTLKMNILGFLLPLFVFVFC) form a helical membrane-spanning segment. At 226-244 (YVRMRRTLKFGERGYDLFK) the chain is on the cytoplasmic side. Residues 245-265 (LVFTIMVVFLLMWGPYNIALF) form a helical membrane-spanning segment. Over 266-288 (LSAFNEHFSLHGCESSHNLDRST) the chain is Extracellular. Residues 289–309 (LITKIIATTHCCVNPLLYVFF) traverse the membrane as a helical segment. The Cytoplasmic portion of the chain corresponds to 310 to 350 (DEAFRKHLYHFCHLCNDTAPQPTEEPAQGTSREEPCLSTKM). The tract at residues 329-350 (PQPTEEPAQGTSREEPCLSTKM) is disordered.

The protein belongs to the G-protein coupled receptor 1 family.

The protein localises to the cell membrane. Receptor for CCL19 and chemerin/RARRES2. Does not appear to be a signaling receptor, but may have a role in modulating chemokine-triggered immune responses by capturing and internalizing CCL19 or by presenting RARRES2 ligand to CMKLR1, a functional signaling receptor. Plays a critical role for the development of Th2 responses. The protein is Chemokine C-C motif receptor-like 2 (CCRL2) of Sus scrofa (Pig).